Reading from the N-terminus, the 804-residue chain is Elongation factor G, mitochondrial (804 aa).

A mitochondrion-targeting transit peptide spans 1 to 63; it reads MSMHRVARAV…RHFSQSPIIR (63 aa). Positions 99–385 constitute a tr-type G domain; it reads RRVRNIGIAA…AVCDYLPNPA (287 aa). GTP is bound by residues 108–115, 183–187, and 237–240; these read AHIDSGKT, DTPGH, and NKMD.

It belongs to the TRAFAC class translation factor GTPase superfamily. Classic translation factor GTPase family. EF-G/EF-2 subfamily.

Its subcellular location is the mitochondrion. The protein operates within protein biosynthesis; polypeptide chain elongation. Functionally, mitochondrial GTPase that catalyzes the GTP-dependent ribosomal translocation step during translation elongation. During this step, the ribosome changes from the pre-translocational (PRE) to the post-translocational (POST) state as the newly formed A-site-bound peptidyl-tRNA and P-site-bound deacylated tRNA move to the P and E sites, respectively. Catalyzes the coordinated movement of the two tRNA molecules, the mRNA and conformational changes in the ribosome. In Botryotinia fuckeliana (strain B05.10) (Noble rot fungus), this protein is Elongation factor G, mitochondrial (mef1).